The following is a 274-amino-acid chain: Large ribosomal subunit protein uL2 (274 aa).

The tract at residues 223 to 274 (VAMNPVDHPHGGGEGRTSGGRHPVTPWGVPTKGYKTRSNKRTDKYIVRRRNK) is disordered.

Belongs to the universal ribosomal protein uL2 family. In terms of assembly, part of the 50S ribosomal subunit. Forms a bridge to the 30S subunit in the 70S ribosome.

In terms of biological role, one of the primary rRNA binding proteins. Required for association of the 30S and 50S subunits to form the 70S ribosome, for tRNA binding and peptide bond formation. It has been suggested to have peptidyltransferase activity; this is somewhat controversial. Makes several contacts with the 16S rRNA in the 70S ribosome. The chain is Large ribosomal subunit protein uL2 from Shewanella oneidensis (strain ATCC 700550 / JCM 31522 / CIP 106686 / LMG 19005 / NCIMB 14063 / MR-1).